A 378-amino-acid polypeptide reads, in one-letter code: F-box/kelch-repeat protein At4g29370 (378 aa).

The F-box domain occupies 23 to 69; it reads TSLFLQLPDEILVNCLARLSKSSYRSLSLVCKTFRSLLHSQPLYSAR. Kelch repeat units follow at residues 124-172, 173-218, 220-259, and 260-305; these read GSKI…VLDD, KIYV…VRKI, VVGGKIYVKTGAEFMDWIYDVKRGKWSAADEYMSLLWSNS, and WCVI…NDNR.

This is F-box/kelch-repeat protein At4g29370 from Arabidopsis thaliana (Mouse-ear cress).